The chain runs to 386 residues: MEDEMPKTLYVGNLSRDVTEALILQLFSQIGPCKNCKMIMDTAGNDPYCFVEFHEHRHAAAALAAMNGRKIMGKEVKVNWATTPSSQKKDTSSSTVVSTQRSQDHFHVFVGDLSPEITTEDIKAAFAPFGRISDARVVKDMATGKSKGYGFVSFFNKWDAENAIQQMGGQWLGGRQIRTNWATRKPPAPKSTYESNTKQLSYDEVVSQSSPNNCTVYCGGVTSGLTEQLMRQTFSPFGQIMEIRVFPDKGYSFVRFSSHESAAHAIVSVNGTTIEGHVVKCYWGKETLDMINPVQQQNQIGYPPTYGQWGQWYGNAQQIGQYVPNGWQVPAYGVYGQPWSQQGFNQTQSSAPWMGPNYSVPPPQGQNGSMLPSQPAGYRVAGYETQ.

Met-1 is subject to N-acetylmethionine. 3 RRM domains span residues 7-83 (KTLY…WATT), 106-184 (FHVF…WATR), and 214-286 (CTVY…WGKE). Residues 355 to 376 (GPNYSVPPPQGQNGSMLPSQPA) form a disordered region.

In terms of assembly, homooligomer; homooligomerization is induced by Zn(2+). Interacts with FASTK; the interactions leads to its phosphorylation. Interacts (via RRM1 and the C-terminal glutamine-rich (Q) sequence) with SNRPC/U1-C (via N-terminus); thereby facilitating spliceosomal U1 snRNP recruitment to 5' splice sites. Phosphorylatedby FASTK; phosphorylation occurs after FAS ligation in FAS-mediated apoptosis and before DNA fragmentation.

The protein resides in the nucleus. The protein localises to the cytoplasm. It localises to the stress granule. Its function is as follows. RNA-binding protein involved in the regulation of alternative pre-RNA splicing and mRNA translation by binding to uridine-rich (U-rich) RNA sequences. Binds to U-rich sequences immediately downstream from a 5' splice sites in a uridine-rich small nuclear ribonucleoprotein (U snRNP)-dependent fashion, thereby modulating alternative pre-RNA splicing. Preferably binds to the U-rich IAS1 sequence in a U1 snRNP-dependent manner; this binding is optimal if a 5' splice site is adjacent to IAS1. Activates the use of heterologous 5' splice sites; the activation depends on the intron sequence downstream from the 5' splice site, with a preference for a downstream U-rich sequence. By interacting with SNRPC/U1-C, promotes recruitment and binding of spliceosomal U1 snRNP to 5' splice sites followed by U-rich sequences, thereby facilitating atypical 5' splice site recognition by U1 snRNP. Activates splicing of alternative exons with weak 5' splice sites followed by a U-rich stretch on its own pre-mRNA and on TIAR mRNA. Acts as a modulator of alternative splicing for the apoptotic FAS receptor, thereby promoting apoptosis. Binds to the 5' splice site region of FAS intron 5 to promote accumulation of transcripts that include exon 6 at the expense of transcripts in which exon 6 is skipped, thereby leading to the transcription of a membrane-bound apoptotic FAS receptor, which promotes apoptosis. Binds to a conserved AU-rich cis element in COL2A1 intron 2 and modulates alternative splicing of COL2A1 exon 2. Also binds to the equivalent AT-rich element in COL2A1 genomic DNA, and may thereby be involved in the regulation of transcription. Involved in the repression of mRNA translation by binding to AU-rich elements (AREs) located in mRNA 3' untranslated regions (3' UTRs), including target ARE-bearing mRNAs encoding TNF and PTGS2. Also participates in the cellular response to environmental stress, by acting downstream of the stress-induced phosphorylation of EIF2S1/EIF2A to promote the recruitment of untranslated mRNAs to cytoplasmic stress granules (SGs), leading to stress-induced translational arrest. Formation and recruitment to SGs is regulated by Zn(2+). Possesses nucleolytic activity against cytotoxic lymphocyte target cells. In Mus musculus (Mouse), this protein is Cytotoxic granule associated RNA binding protein TIA1 (Tia1).